Reading from the N-terminus, the 125-residue chain is UPF0102 protein PSPA7_4996 (125 aa).

It belongs to the UPF0102 family.

The chain is UPF0102 protein PSPA7_4996 from Pseudomonas paraeruginosa (strain DSM 24068 / PA7) (Pseudomonas aeruginosa (strain PA7)).